Consider the following 450-residue polypeptide: Serine/threonine-protein kinase-transforming protein Rmil (450 aa).

Composition is skewed to basic and acidic residues over residues 1–14 and 49–73; these read MEAVIKDLIRDQGV and QRERKSSSSSEDRNRMKTLGRRDSS. The interval 1 to 80 is disordered; the sequence is MEAVIKDLIR…DSSDDWEIPD (80 aa). The region spanning 83 to 343 is the Protein kinase domain; it reads ITVGQRIGSG…PQILASIELL (261 aa). ATP is bound by residues 89–97 and lysine 109; that span reads IGSGSFGTV. Aspartate 202 functions as the Proton acceptor in the catalytic mechanism.

It belongs to the protein kinase superfamily. TKL Ser/Thr protein kinase family. RAF subfamily.

The enzyme catalyses L-seryl-[protein] + ATP = O-phospho-L-seryl-[protein] + ADP + H(+). It carries out the reaction L-threonyl-[protein] + ATP = O-phospho-L-threonyl-[protein] + ADP + H(+). The polypeptide is Serine/threonine-protein kinase-transforming protein Rmil (V-RMIL) (Avian rous-associated virus type 1).